Here is a 491-residue protein sequence, read N- to C-terminus: Aspartyl/glutamyl-tRNA(Asn/Gln) amidotransferase subunit B (491 aa).

The protein belongs to the GatB/GatE family. GatB subfamily. In terms of assembly, heterotrimer of A, B and C subunits.

The enzyme catalyses L-glutamyl-tRNA(Gln) + L-glutamine + ATP + H2O = L-glutaminyl-tRNA(Gln) + L-glutamate + ADP + phosphate + H(+). It catalyses the reaction L-aspartyl-tRNA(Asn) + L-glutamine + ATP + H2O = L-asparaginyl-tRNA(Asn) + L-glutamate + ADP + phosphate + 2 H(+). Functionally, allows the formation of correctly charged Asn-tRNA(Asn) or Gln-tRNA(Gln) through the transamidation of misacylated Asp-tRNA(Asn) or Glu-tRNA(Gln) in organisms which lack either or both of asparaginyl-tRNA or glutaminyl-tRNA synthetases. The reaction takes place in the presence of glutamine and ATP through an activated phospho-Asp-tRNA(Asn) or phospho-Glu-tRNA(Gln). This chain is Aspartyl/glutamyl-tRNA(Asn/Gln) amidotransferase subunit B, found in Parasynechococcus marenigrum (strain WH8102).